The primary structure comprises 111 residues: Large ribosomal subunit protein uL22 (111 aa).

The protein belongs to the universal ribosomal protein uL22 family. Part of the 50S ribosomal subunit.

This protein binds specifically to 23S rRNA; its binding is stimulated by other ribosomal proteins, e.g. L4, L17, and L20. It is important during the early stages of 50S assembly. It makes multiple contacts with different domains of the 23S rRNA in the assembled 50S subunit and ribosome. Its function is as follows. The globular domain of the protein is located near the polypeptide exit tunnel on the outside of the subunit, while an extended beta-hairpin is found that lines the wall of the exit tunnel in the center of the 70S ribosome. The protein is Large ribosomal subunit protein uL22 of Clostridium beijerinckii (strain ATCC 51743 / NCIMB 8052) (Clostridium acetobutylicum).